The following is a 454-amino-acid chain: Retinoblastoma-binding protein homolog 5 (454 aa).

6 WD repeats span residues 23–64 (LQNA…RTFS), 65–104 (AHCL…LLHR), 153–192 (SSDE…CVAW), 196–235 (NTVQ…HQRG), 248–288 (VNKA…LIKI), and 292–330 (NKGE…NWSA).

In terms of assembly, component of the SET2 complex (also known as the SET1/COMPASS complex), which contains at least set-2, swd-2.1, cfp-1, rbbp-5, wdr-5.1, dpy-30 and ash-2.

It is found in the nucleus. In terms of biological role, required for di- and trimethylation at 'Lys-4' of histone H3. Regulates left/right asymmetry of ASE sensory neurons, via its role as a component of the SET2 complex. This is Retinoblastoma-binding protein homolog 5 (rbbp-5) from Caenorhabditis elegans.